The chain runs to 229 residues: Cytidylate kinase (229 aa).

Residue 12–20 (GPSGAGKGT) coordinates ATP.

The protein belongs to the cytidylate kinase family. Type 1 subfamily.

Its subcellular location is the cytoplasm. It catalyses the reaction CMP + ATP = CDP + ADP. It carries out the reaction dCMP + ATP = dCDP + ADP. The protein is Cytidylate kinase of Pseudomonas aeruginosa (strain UCBPP-PA14).